We begin with the raw amino-acid sequence, 423 residues long: Serine--tRNA ligase (423 aa).

230 to 232 contacts L-serine; it reads TSE. 261 to 263 is an ATP binding site; that stretch reads RSE. Glu284 is an L-serine binding site. 348 to 351 lines the ATP pocket; that stretch reads EISS. Ser384 serves as a coordination point for L-serine.

This sequence belongs to the class-II aminoacyl-tRNA synthetase family. Type-1 seryl-tRNA synthetase subfamily. As to quaternary structure, homodimer. The tRNA molecule binds across the dimer.

It is found in the cytoplasm. The catalysed reaction is tRNA(Ser) + L-serine + ATP = L-seryl-tRNA(Ser) + AMP + diphosphate + H(+). The enzyme catalyses tRNA(Sec) + L-serine + ATP = L-seryl-tRNA(Sec) + AMP + diphosphate + H(+). It functions in the pathway aminoacyl-tRNA biosynthesis; selenocysteinyl-tRNA(Sec) biosynthesis; L-seryl-tRNA(Sec) from L-serine and tRNA(Sec): step 1/1. Its function is as follows. Catalyzes the attachment of serine to tRNA(Ser). Is also able to aminoacylate tRNA(Sec) with serine, to form the misacylated tRNA L-seryl-tRNA(Sec), which will be further converted into selenocysteinyl-tRNA(Sec). The polypeptide is Serine--tRNA ligase (Macrococcus caseolyticus (strain JCSC5402) (Macrococcoides caseolyticum)).